A 397-amino-acid chain; its full sequence is Diphosphomevalonate decarboxylase (397 aa).

Residues 19–22 (YWGK), Arg-74, 153–158 (SGSACR), and Thr-209 each bind (R)-5-diphosphomevalonate. A disordered region spans residues 378 to 397 (GPGPQDTKSSLIDPETGLPR).

This sequence belongs to the diphosphomevalonate decarboxylase family. As to quaternary structure, homodimer.

The catalysed reaction is (R)-5-diphosphomevalonate + ATP = isopentenyl diphosphate + ADP + phosphate + CO2. Its pathway is isoprenoid biosynthesis; isopentenyl diphosphate biosynthesis via mevalonate pathway; isopentenyl diphosphate from (R)-mevalonate: step 3/3. Its function is as follows. Diphosphomevalonate decarboxylase; part of the second module of ergosterol biosynthesis pathway that includes the middle steps of the pathway. The second module is carried out in the vacuole and involves the formation of farnesyl diphosphate, which is also an important intermediate in the biosynthesis of ubiquinone, dolichol, heme and prenylated proteins. Activity by the mevalonate kinase ERG12 first converts mevalonate into 5-phosphomevalonate. 5-phosphomevalonate is then further converted to 5-diphosphomevalonate by the phosphomevalonate kinase ERG8. The diphosphomevalonate decarboxylase MVD1/ERG19 then produces isopentenyl diphosphate. The isopentenyl-diphosphate delta-isomerase IDI1 then catalyzes the 1,3-allylic rearrangement of the homoallylic substrate isopentenyl (IPP) to its highly electrophilic allylic isomer, dimethylallyl diphosphate (DMAPP). Finally the farnesyl diphosphate synthase ERG20 catalyzes the sequential condensation of isopentenyl pyrophosphate with dimethylallyl pyrophosphate, and then with the resultant geranylpyrophosphate to the ultimate product farnesyl pyrophosphate. The protein is Diphosphomevalonate decarboxylase of Eremothecium gossypii (strain ATCC 10895 / CBS 109.51 / FGSC 9923 / NRRL Y-1056) (Yeast).